A 226-amino-acid chain; its full sequence is Leucyl/phenylalanyl-tRNA--protein transferase (226 aa).

Belongs to the L/F-transferase family.

It is found in the cytoplasm. The catalysed reaction is N-terminal L-lysyl-[protein] + L-leucyl-tRNA(Leu) = N-terminal L-leucyl-L-lysyl-[protein] + tRNA(Leu) + H(+). The enzyme catalyses N-terminal L-arginyl-[protein] + L-leucyl-tRNA(Leu) = N-terminal L-leucyl-L-arginyl-[protein] + tRNA(Leu) + H(+). It carries out the reaction L-phenylalanyl-tRNA(Phe) + an N-terminal L-alpha-aminoacyl-[protein] = an N-terminal L-phenylalanyl-L-alpha-aminoacyl-[protein] + tRNA(Phe). Functions in the N-end rule pathway of protein degradation where it conjugates Leu, Phe and, less efficiently, Met from aminoacyl-tRNAs to the N-termini of proteins containing an N-terminal arginine or lysine. This is Leucyl/phenylalanyl-tRNA--protein transferase from Pseudomonas aeruginosa (strain LESB58).